Reading from the N-terminus, the 191-residue chain is Orotate phosphoribosyltransferase (191 aa).

116–124 (EDVVTTGGS) is a 5-phospho-alpha-D-ribose 1-diphosphate binding site. Orotate-binding residues include threonine 120 and arginine 148.

This sequence belongs to the purine/pyrimidine phosphoribosyltransferase family. PyrE subfamily. Homodimer. Mg(2+) is required as a cofactor.

The enzyme catalyses orotidine 5'-phosphate + diphosphate = orotate + 5-phospho-alpha-D-ribose 1-diphosphate. The protein operates within pyrimidine metabolism; UMP biosynthesis via de novo pathway; UMP from orotate: step 1/2. In terms of biological role, catalyzes the transfer of a ribosyl phosphate group from 5-phosphoribose 1-diphosphate to orotate, leading to the formation of orotidine monophosphate (OMP). This is Orotate phosphoribosyltransferase from Carboxydothermus hydrogenoformans (strain ATCC BAA-161 / DSM 6008 / Z-2901).